The sequence spans 629 residues: Pentatricopeptide repeat-containing protein At1g62930, chloroplastic (629 aa).

The transit peptide at 1–41 directs the protein to the chloroplast; the sequence is MTSCVHLGIVASQSKKMSLAKRFAQLRKASPLFSLRGVYFS. PPR repeat units follow at residues 79–113, 114–148, 149–183, 184–218, 219–253, 254–288, 289–323, 324–358, 359–393, 394–428, 429–463, 464–498, 499–533, 534–568, and 569–603; these read SIVE…RISY, DLYS…GYEP, DIVT…EYQP, NTVT…GCQP, DLFT…KIEA, DVVI…GIRP, NVVT…KINP, NVVT…SIDP, DIFT…DCFP, NVVT…GLVG, NTVT…GVPP, DIIT…KMEP, DIYT…GVKP, NVII…GTLP, and NSGT…GFVG.

Belongs to the PPR family. P subfamily.

Its subcellular location is the plastid. The protein resides in the chloroplast. The polypeptide is Pentatricopeptide repeat-containing protein At1g62930, chloroplastic (Arabidopsis thaliana (Mouse-ear cress)).